A 292-amino-acid chain; its full sequence is ATP synthase gamma chain (292 aa).

The protein belongs to the ATPase gamma chain family. F-type ATPases have 2 components, CF(1) - the catalytic core - and CF(0) - the membrane proton channel. CF(1) has five subunits: alpha(3), beta(3), gamma(1), delta(1), epsilon(1). CF(0) has three main subunits: a, b and c.

The protein localises to the cell inner membrane. Its function is as follows. Produces ATP from ADP in the presence of a proton gradient across the membrane. The gamma chain is believed to be important in regulating ATPase activity and the flow of protons through the CF(0) complex. The protein is ATP synthase gamma chain of Brucella canis (strain ATCC 23365 / NCTC 10854 / RM-666).